Here is a 353-residue protein sequence, read N- to C-terminus: Guanine nucleotide-binding protein alpha-1 subunit (353 aa).

The N-myristoyl glycine moiety is linked to residue G2. A lipid anchor (S-palmitoyl cysteine) is attached at C3. In terms of domain architecture, G-alpha spans 32–353 (NEIKMLLLGA…QVNLRDCGLL (322 aa)). The segment at 35–48 (KMLLLGAGESGKST) is G1 motif. E43, S44, G45, K46, S47, T48, D150, L175, T181, G203, N269, K270, D272, and A325 together coordinate GTP. Residue S47 participates in Mg(2+) binding. The G2 motif stretch occupies residues 173-181 (DVLRSRVKT). Mg(2+) is bound at residue T181. The tract at residues 196–205 (YKLFDVGGQR) is G3 motif. The G4 motif stretch occupies residues 265-272 (ILFLNKID). The interval 323–328 (TCATDT) is G5 motif.

Belongs to the G-alpha family. As to quaternary structure, g proteins are composed of 3 units; alpha, beta and gamma. The alpha chain contains the guanine nucleotide binding site. Mg(2+) serves as cofactor.

Guanine nucleotide-binding proteins (G proteins) are involved as modulators or transducers in various transmembrane signaling systems. This Mycosarcoma maydis (Corn smut fungus) protein is Guanine nucleotide-binding protein alpha-1 subunit (GPA1).